The primary structure comprises 165 residues: Large ribosomal subunit protein uL10 (165 aa).

It belongs to the universal ribosomal protein uL10 family. As to quaternary structure, part of the ribosomal stalk of the 50S ribosomal subunit. The N-terminus interacts with L11 and the large rRNA to form the base of the stalk. The C-terminus forms an elongated spine to which L12 dimers bind in a sequential fashion forming a multimeric L10(L12)X complex.

In terms of biological role, forms part of the ribosomal stalk, playing a central role in the interaction of the ribosome with GTP-bound translation factors. In Shewanella piezotolerans (strain WP3 / JCM 13877), this protein is Large ribosomal subunit protein uL10.